We begin with the raw amino-acid sequence, 205 residues long: Protein Nef (205 aa).

Gly-2 carries N-myristoyl glycine; by host lipidation. Ser-6 carries the phosphoserine; by host modification. The interval 62–65 (EEEE) is acidic; interacts with host PACS1 and PACS2; stabilizes the interaction of NEF/MHC-I with host AP1M1; necessary for MHC-I internalization. Positions 69–78 (PVRPQVPVRP) are SH3-binding; interaction with Src family tyrosine kinases. The PxxP; stabilizes the interaction of NEF/MHC-I with host AP1M1; necessary for MHC-I internalization motif lies at 72–75 (PQVP). The segment at 108 to 124 (DTLDLWVYHTQGYFPDW) is mediates dimerization, Nef-PTE1 interaction. The tract at residues 148–180 (VDPEEVEKANEGENNCLLHPMSQHGMEDEDREV) is binding to ATP6V1H. The Dileucine internalization motif; necessary for CD4 internalization signature appears at 164–165 (LL). The short motif at 174 to 175 (ED) is the Diacidic; necessary for CD4 internalization element.

It belongs to the lentivirus primate group Nef protein family. In terms of assembly, monomer; cytosolic form. Homodimer; membrane bound form. Interacts with Nef associated p21-activated kinase (PAK2); this interaction activates PAK2. Associates with the Nef-MHC-I-AP1 complex; this complex is required for MHC-I internalization. Interacts (via C-terminus) with host PI3-kinase. Interacts with host PACS1; this interaction seems to be weak. Interacts with host PACS2. Interacts with host LCK and MAPK3; these interactions inhibit the kinase activity of the latter. Interacts with host ATP6V1H; this interaction may play a role in CD4 endocytosis. Associates with the CD4-Nef-AP2 complex; this complex is required for CD4 internalization. Interacts with host AP2 subunit alpha and AP2 subunit sigma2. Interacts with TCR-zeta chain; this interaction up-regulates the Fas ligand (FasL) surface expression. Interacts with host HCK, LYN, and SRC; these interactions activate the Src family kinases. Interacts with MAP3K5; this interaction inhibits the Fas and TNFR-mediated death signals. Interacts with beta-COP and PTE1. Interacts with human RACK1; this increases Nef phosphorylation by PKC. Interacts with TP53; this interaction decreases the half-life of TP53, protecting the infected cell against p53-mediated apoptosis. Post-translationally, the virion-associated Nef proteins are cleaved by the viral protease to release the soluble C-terminal core protein. Nef is probably cleaved concomitantly with viral structural proteins on maturation of virus particles. In terms of processing, myristoylated. Phosphorylated on serine residues, probably by host PKCdelta and theta.

Its subcellular location is the host cell membrane. It localises to the virion. It is found in the secreted. The protein resides in the host Golgi apparatus membrane. Functionally, factor of infectivity and pathogenicity, required for optimal virus replication. Alters numerous pathways of T-lymphocyte function and down-regulates immunity surface molecules in order to evade host defense and increase viral infectivity. Alters the functionality of other immunity cells, like dendritic cells, monocytes/macrophages and NK cells. Its function is as follows. In infected CD4(+) T-lymphocytes, down-regulates the surface MHC-I, mature MHC-II, CD4, CD28, CCR5 and CXCR4 molecules. Mediates internalization and degradation of host CD4 through the interaction of with the cytoplasmic tail of CD4, the recruitment of AP-2 (clathrin adapter protein complex 2), internalization through clathrin coated pits, and subsequent transport to endosomes and lysosomes for degradation. Diverts host MHC-I molecules to the trans-Golgi network-associated endosomal compartments by an endocytic pathway to finally target them for degradation. MHC-I down-regulation may involve AP-1 (clathrin adapter protein complex 1) or possibly Src family kinase-ZAP70/Syk-PI3K cascade recruited by PACS2. In consequence infected cells are masked for immune recognition by cytotoxic T-lymphocytes. Decreasing the number of immune receptors also prevents reinfection by more HIV particles (superinfection). Down-regulates host SERINC3 and SERINC5 thereby excluding these proteins from the viral particles. Virion infectivity is drastically higher when SERINC3 or SERINC5 are excluded from the viral envelope, because these host antiviral proteins impair the membrane fusion event necessary for subsequent virion penetration. In terms of biological role, bypasses host T-cell signaling by inducing a transcriptional program nearly identical to that of anti-CD3 cell activation. Interaction with TCR-zeta chain up-regulates the Fas ligand (FasL). Increasing surface FasL molecules and decreasing surface MHC-I molecules on infected CD4(+) cells send attacking cytotoxic CD8+ T-lymphocytes into apoptosis. Plays a role in optimizing the host cell environment for viral replication without causing cell death by apoptosis. Protects the infected cells from apoptosis in order to keep them alive until the next virus generation is ready to strike. Inhibits the Fas and TNFR-mediated death signals by blocking MAP3K5/ASK1. Decreases the half-life of TP53, protecting the infected cell against p53-mediated apoptosis. Inhibits the apoptotic signals regulated by the Bcl-2 family proteins through the formation of a Nef/PI3-kinase/PAK2 complex that leads to activation of PAK2 and induces phosphorylation of host BAD. Functionally, extracellular Nef protein targets CD4(+) T-lymphocytes for apoptosis by interacting with CXCR4 surface receptors. This chain is Protein Nef, found in Human immunodeficiency virus type 1 group M subtype F1 (isolate VI850) (HIV-1).